We begin with the raw amino-acid sequence, 193 residues long: dCTP deaminase (193 aa).

DCTP is bound by residues 110 to 115 (RSSLAR), Asp128, 136 to 138 (VLE), Tyr171, Lys178, and Gln182. The active-site Proton donor/acceptor is the Glu138. The disordered stretch occupies residues 173 to 193 (KRKNAKYKDQQDAVASRISQD).

Belongs to the dCTP deaminase family. In terms of assembly, homotrimer.

It carries out the reaction dCTP + H2O + H(+) = dUTP + NH4(+). It participates in pyrimidine metabolism; dUMP biosynthesis; dUMP from dCTP (dUTP route): step 1/2. Functionally, catalyzes the deamination of dCTP to dUTP. The chain is dCTP deaminase from Shewanella sp. (strain ANA-3).